The primary structure comprises 107 residues: Small ribosomal subunit protein bS16 (107 aa).

The tract at residues 85 to 107 (REARNNPEKAVPRKERKAAEAGK) is disordered.

This sequence belongs to the bacterial ribosomal protein bS16 family.

The polypeptide is Small ribosomal subunit protein bS16 (Rhodopseudomonas palustris (strain BisB5)).